We begin with the raw amino-acid sequence, 773 residues long: Phenylalanine--tRNA ligase beta subunit (773 aa).

One can recognise a tRNA-binding domain in the interval 39–150 (LKAPDKVVVG…GKLELGRPLN (112 aa)). The B5 domain occupies 391 to 467 (KELPIIPISI…RIIGIDNIAS (77 aa)). Asp445, Asp451, Glu454, and Glu455 together coordinate Mg(2+). The FDX-ACB domain maps to 682–773 (SKFPAITRDL…TLKNLGLDLR (92 aa)).

The protein belongs to the phenylalanyl-tRNA synthetase beta subunit family. Type 1 subfamily. In terms of assembly, tetramer of two alpha and two beta subunits. Requires Mg(2+) as cofactor.

Its subcellular location is the cytoplasm. It catalyses the reaction tRNA(Phe) + L-phenylalanine + ATP = L-phenylalanyl-tRNA(Phe) + AMP + diphosphate + H(+). The chain is Phenylalanine--tRNA ligase beta subunit (pheT) from Campylobacter jejuni subsp. jejuni serotype O:2 (strain ATCC 700819 / NCTC 11168).